Consider the following 441-residue polypeptide: S-adenosylmethionine synthase 1 (441 aa).

Residue glutamate 9 coordinates Mg(2+). Histidine 15 contacts ATP. Glutamate 43 lines the K(+) pocket. L-methionine is bound by residues glutamate 56 and glutamine 99. ATP-binding positions include 167–169 (DGK), 235–238 (SGRF), aspartate 246, 252–253 (RK), alanine 269, lysine 273, and lysine 277. Aspartate 246 lines the L-methionine pocket. Residue lysine 277 participates in L-methionine binding.

It belongs to the AdoMet synthase family. In terms of assembly, homotetramer. Mn(2+) serves as cofactor. It depends on Mg(2+) as a cofactor. Requires Co(2+) as cofactor. K(+) is required as a cofactor.

The protein localises to the cytoplasm. The catalysed reaction is L-methionine + ATP + H2O = S-adenosyl-L-methionine + phosphate + diphosphate. The protein operates within amino-acid biosynthesis; S-adenosyl-L-methionine biosynthesis; S-adenosyl-L-methionine from L-methionine: step 1/1. In terms of biological role, catalyzes the formation of S-adenosylmethionine from methionine and ATP. The reaction comprises two steps that are both catalyzed by the same enzyme: formation of S-adenosylmethionine (AdoMet) and triphosphate, and subsequent hydrolysis of the triphosphate. The chain is S-adenosylmethionine synthase 1 (SAMS1) from Daucus carota (Wild carrot).